Consider the following 29-residue polypeptide: Cytochrome b6-f complex subunit 8 (29 aa).

The helical transmembrane segment at 3–23 (IVSFAWAALMVVFTFSLSLVV) threads the bilayer.

It belongs to the PetN family. The 4 large subunits of the cytochrome b6-f complex are cytochrome b6, subunit IV (17 kDa polypeptide, PetD), cytochrome f and the Rieske protein, while the 4 small subunits are PetG, PetL, PetM and PetN. The complex functions as a dimer.

The protein localises to the plastid. It is found in the chloroplast thylakoid membrane. Component of the cytochrome b6-f complex, which mediates electron transfer between photosystem II (PSII) and photosystem I (PSI), cyclic electron flow around PSI, and state transitions. The sequence is that of Cytochrome b6-f complex subunit 8 from Phalaenopsis aphrodite subsp. formosana (Moth orchid).